A 153-amino-acid chain; its full sequence is Ribonuclease H (153 aa).

The 143-residue stretch at 4 to 146 (NNEIVEIYTD…CDRLATEQIK (143 aa)) folds into the RNase H type-1 domain. D13, E51, D73, and D138 together coordinate Mg(2+).

It belongs to the RNase H family. As to quaternary structure, monomer. The cofactor is Mg(2+).

Its subcellular location is the cytoplasm. It carries out the reaction Endonucleolytic cleavage to 5'-phosphomonoester.. Functionally, endonuclease that specifically degrades the RNA of RNA-DNA hybrids. The chain is Ribonuclease H from Caldanaerobacter subterraneus subsp. tengcongensis (strain DSM 15242 / JCM 11007 / NBRC 100824 / MB4) (Thermoanaerobacter tengcongensis).